Here is a 129-residue protein sequence, read N- to C-terminus: Glycine cleavage system H protein (129 aa).

In terms of domain architecture, Lipoyl-binding spans 24 to 106 (SYTVGITEHA…YGEGWFFRVM (83 aa)). Lys65 is modified (N6-lipoyllysine).

This sequence belongs to the GcvH family. In terms of assembly, the glycine cleavage system is composed of four proteins: P, T, L and H. It depends on (R)-lipoate as a cofactor.

In terms of biological role, the glycine cleavage system catalyzes the degradation of glycine. The H protein shuttles the methylamine group of glycine from the P protein to the T protein. The sequence is that of Glycine cleavage system H protein from Shewanella oneidensis (strain ATCC 700550 / JCM 31522 / CIP 106686 / LMG 19005 / NCIMB 14063 / MR-1).